Consider the following 150-residue polypeptide: MVLCFPLLLLLLVLWGPVCPLHAWPKRLTKAHWFEIQHIQPSPLQCNRAMSGINNYTQHCKHQNTFLHDSFQNVAAVCDLLSIVCKNRRHNCHQSSKPVNMTDCRLISGKYPQCRYSAAAQYKFFIVACDPPQKSDPRYKLVPVHLDSIL.

Residues methionine 1–alanine 23 form the signal peptide. Histidine 38 (proton acceptor) is an active-site residue. 4 disulfide bridges follow: cysteine 46–cysteine 104, cysteine 60–cysteine 114, cysteine 78–cysteine 129, and cysteine 85–cysteine 92. Residue asparagine 55 is glycosylated (N-linked (GlcNAc...) asparagine). Substrate-binding positions include lysine 61–threonine 65 and lysine 86. N-linked (GlcNAc...) asparagine glycosylation occurs at asparagine 100. Arginine 105 is a substrate binding site. Histidine 145 acts as the Proton donor in catalysis.

Belongs to the pancreatic ribonuclease family. In terms of assembly, interacts (via N-terminus) with bacterial lipopolysaccharide (LPS).

It localises to the secreted. The protein resides in the lysosome. Its subcellular location is the cytoplasmic granule. In terms of biological role, ribonuclease which shows a preference for the pyrimidines uridine and cytosine. Has potent antibacterial activity against a range of Gram-positive and Gram-negative bacteria, including P.aeruginosa, A.baumanii, M.luteus, S.aureus, E.faecalis, E.faecium, S.saprophyticus and E.coli. Causes loss of bacterial membrane integrity, and also promotes agglutination of Gram-negative bacteria. Probably contributes to urinary tract sterility. Bactericidal activity is independent of RNase activity. In Pongo pygmaeus (Bornean orangutan), this protein is Ribonuclease K6 (RNASE6).